Consider the following 261-residue polypeptide: Proteasome subunit alpha type-4 (261 aa).

A phosphoserine mark is found at S13 and S75. An N6-acetyllysine modification is found at K127. Position 173 is a phosphoserine (S173). At K176 the chain carries N6-acetyllysine. The segment at 240-261 is disordered; it reads HEEEEAKAEREKKEKEQKEKDK.

The protein belongs to the peptidase T1A family. The 26S proteasome consists of a 20S proteasome core and two 19S regulatory subunits. The 20S proteasome core is a barrel-shaped complex made of 28 subunits that are arranged in four stacked rings. The two outer rings are each formed by seven alpha subunits, and the two inner rings are formed by seven beta subunits. The proteolytic activity is exerted by three beta-subunits PSMB5, PSMB6 and PSMB7.

The protein localises to the cytoplasm. It is found in the nucleus. In terms of biological role, component of the 20S core proteasome complex involved in the proteolytic degradation of most intracellular proteins. This complex plays numerous essential roles within the cell by associating with different regulatory particles. Associated with two 19S regulatory particles, forms the 26S proteasome and thus participates in the ATP-dependent degradation of ubiquitinated proteins. The 26S proteasome plays a key role in the maintenance of protein homeostasis by removing misfolded or damaged proteins that could impair cellular functions, and by removing proteins whose functions are no longer required. Associated with the PA200 or PA28, the 20S proteasome mediates ubiquitin-independent protein degradation. This type of proteolysis is required in several pathways including spermatogenesis (20S-PA200 complex) or generation of a subset of MHC class I-presented antigenic peptides (20S-PA28 complex). This chain is Proteasome subunit alpha type-4 (PSMA4), found in Macaca fascicularis (Crab-eating macaque).